We begin with the raw amino-acid sequence, 292 residues long: Ribosomal protein L11 methyltransferase (292 aa).

Positions 136, 159, 181, and 228 each coordinate S-adenosyl-L-methionine.

The protein belongs to the methyltransferase superfamily. PrmA family.

It localises to the cytoplasm. It catalyses the reaction L-lysyl-[protein] + 3 S-adenosyl-L-methionine = N(6),N(6),N(6)-trimethyl-L-lysyl-[protein] + 3 S-adenosyl-L-homocysteine + 3 H(+). Functionally, methylates ribosomal protein L11. This chain is Ribosomal protein L11 methyltransferase, found in Rhizobium rhizogenes (strain K84 / ATCC BAA-868) (Agrobacterium radiobacter).